A 95-amino-acid polypeptide reads, in one-letter code: Small ribosomal subunit protein uS19 (95 aa).

It belongs to the universal ribosomal protein uS19 family.

Its function is as follows. Protein S19 forms a complex with S13 that binds strongly to the 16S ribosomal RNA. The polypeptide is Small ribosomal subunit protein uS19 (Myxococcus xanthus (strain DK1622)).